The following is a 269-amino-acid chain: Seven in absentia homolog 3 (269 aa).

The SIAH-type; degenerate zinc-finger motif lies at 61–132 (GSFHPHHLSH…VVPHLRQIHR (72 aa)). Zn(2+) is bound by residues Cys107, Cys114, His126, and His131.

This sequence belongs to the SINA (Seven in absentia) family.

The protein localises to the mitochondrion. In terms of biological role, negative regulator of PRKN translocation to damaged mitochondria. Acts probably by destabilizing PINK1 protein, hence inhibiting PRKN targeting to dysfunctional depolarized mitochondria. In Homo sapiens (Human), this protein is Seven in absentia homolog 3 (SIAH3).